Here is a 380-residue protein sequence, read N- to C-terminus: Flap endonuclease 1-A (380 aa).

Residues 1-105 are N-domain; it reads MGIKGLTKLL…EELAKRFSKR (105 aa). Residue D34 coordinates Mg(2+). DNA is bound at residue R71. D87, E159, E161, D180, and D182 together coordinate Mg(2+). Residues 123–254 are I-domain; it reads AVEKLSKRTV…QTALKLIRQH (132 aa). DNA is bound at residue E159. Residues G232 and D234 each coordinate DNA. D234 contacts Mg(2+). Positions 336-344 are interaction with PCNA; the sequence is SQGRLESFF. Residues 351–380 are disordered; sequence SAPLKRKETSDKTSKAAAANKKTKAGGKKK. Residues 355-364 show a composition bias toward basic and acidic residues; sequence KRKETSDKTS. The segment covering 371–380 has biased composition (basic residues); that stretch reads KKTKAGGKKK.

Belongs to the XPG/RAD2 endonuclease family. FEN1 subfamily. Interacts with PCNA. Three molecules of FEN1 bind to one PCNA trimer with each molecule binding to one PCNA monomer. PCNA stimulates the nuclease activity without altering cleavage specificity. Mg(2+) serves as cofactor. In terms of processing, phosphorylated. Phosphorylation upon DNA damage induces relocalization to the nuclear plasma.

The protein resides in the nucleus. It is found in the nucleolus. It localises to the nucleoplasm. Its subcellular location is the mitochondrion. Structure-specific nuclease with 5'-flap endonuclease and 5'-3' exonuclease activities involved in DNA replication and repair. During DNA replication, cleaves the 5'-overhanging flap structure that is generated by displacement synthesis when DNA polymerase encounters the 5'-end of a downstream Okazaki fragment. It enters the flap from the 5'-end and then tracks to cleave the flap base, leaving a nick for ligation. Also involved in the long patch base excision repair (LP-BER) pathway, by cleaving within the apurinic/apyrimidinic (AP) site-terminated flap. Acts as a genome stabilization factor that prevents flaps from equilibrating into structures that lead to duplications and deletions. Also possesses 5'-3' exonuclease activity on nicked or gapped double-stranded DNA, and exhibits RNase H activity. Also involved in replication and repair of rDNA and in repairing mitochondrial DNA. The chain is Flap endonuclease 1-A from Sorghum bicolor (Sorghum).